Here is a 242-residue protein sequence, read N- to C-terminus: Small ribosomal subunit protein uS2 (242 aa).

It belongs to the universal ribosomal protein uS2 family.

In Shewanella halifaxensis (strain HAW-EB4), this protein is Small ribosomal subunit protein uS2.